Reading from the N-terminus, the 557-residue chain is Suprabasin (557 aa).

Positions 1–23 (MHLASLLSSCSLLLLLGALPGWA) are cleaved as a signal peptide. Disordered stretches follow at residues 150–175 (RFGQ…GAHH), 422–441 (GQGA…KVAQ), 464–490 (AAGQ…GKQE), and 509–533 (NQLL…TTLT). Residues 153 to 175 (QGAHHATGQAGKEAEKFGQGAHH) are compositionally biased toward low complexity. The span at 476–487 (GQGVHHAAGQAG) shows a compositional bias: low complexity.

It is found in the secreted. The protein is Suprabasin (SBSN) of Bos taurus (Bovine).